Reading from the N-terminus, the 401-residue chain is Probable tRNA sulfurtransferase (401 aa).

One can recognise a THUMP domain in the interval 63–168 (TTAEQALSCL…EREAFLYGAR (106 aa)). Residues 186-187 (LL), 211-212 (YF), R268, G290, and Q299 contribute to the ATP site.

It belongs to the ThiI family.

The protein resides in the cytoplasm. The enzyme catalyses [ThiI sulfur-carrier protein]-S-sulfanyl-L-cysteine + a uridine in tRNA + 2 reduced [2Fe-2S]-[ferredoxin] + ATP + H(+) = [ThiI sulfur-carrier protein]-L-cysteine + a 4-thiouridine in tRNA + 2 oxidized [2Fe-2S]-[ferredoxin] + AMP + diphosphate. It carries out the reaction [ThiS sulfur-carrier protein]-C-terminal Gly-Gly-AMP + S-sulfanyl-L-cysteinyl-[cysteine desulfurase] + AH2 = [ThiS sulfur-carrier protein]-C-terminal-Gly-aminoethanethioate + L-cysteinyl-[cysteine desulfurase] + A + AMP + 2 H(+). It functions in the pathway cofactor biosynthesis; thiamine diphosphate biosynthesis. Its function is as follows. Catalyzes the ATP-dependent transfer of a sulfur to tRNA to produce 4-thiouridine in position 8 of tRNAs, which functions as a near-UV photosensor. Also catalyzes the transfer of sulfur to the sulfur carrier protein ThiS, forming ThiS-thiocarboxylate. This is a step in the synthesis of thiazole, in the thiamine biosynthesis pathway. The sulfur is donated as persulfide by IscS. This Treponema pallidum subsp. pallidum (strain SS14) protein is Probable tRNA sulfurtransferase.